Here is a 321-residue protein sequence, read N- to C-terminus: Nod factor export ATP-binding protein I (321 aa).

One can recognise an ABC transporter domain in the interval 17–247 (LSVEGLRKRY…EIGCDVVEVY (231 aa)). 49–56 (GPNGAGKT) contacts ATP.

Belongs to the ABC transporter superfamily. Lipooligosaccharide exporter (TC 3.A.1.102) family. As to quaternary structure, the complex is composed of two ATP-binding proteins (NodI) and two transmembrane proteins (NodJ).

Its subcellular location is the cell inner membrane. Functionally, part of the ABC transporter complex NodIJ involved in the export of the nodulation factors (Nod factors), the bacterial signal molecules that induce symbiosis and subsequent nodulation induction. Nod factors are LCO (lipo-chitin oligosaccharide), a modified beta-1,4-linked N-acetylglucosamine oligosaccharide. This subunit is responsible for energy coupling to the transport system. The protein is Nod factor export ATP-binding protein I of Ralstonia nicotianae (strain ATCC BAA-1114 / GMI1000) (Ralstonia solanacearum).